The following is a 379-amino-acid chain: Sialidase-2 (379 aa).

The FRIP motif motif lies at 20–23 (YRIP). Substrate is bound by residues R21 and R41. D46 (proton acceptor) is an active-site residue. A BNR 1 repeat occupies 127-138 (VTSTDYGMNWSP). Residues Y179 and Y181 each contribute to the substrate site. One copy of the BNR 2 repeat lies at 197 to 208 (FISLDHGHTWEL). 3 residues coordinate substrate: E218, R237, and R303. Residue Y333 is the Nucleophile of the active site. The active site involves E354.

This sequence belongs to the glycosyl hydrolase 33 family. Detected in skeletal muscle.

It is found in the cytoplasm. The protein resides in the cytosol. It catalyses the reaction Hydrolysis of alpha-(2-&gt;3)-, alpha-(2-&gt;6)-, alpha-(2-&gt;8)- glycosidic linkages of terminal sialic acid residues in oligosaccharides, glycoproteins, glycolipids, colominic acid and synthetic substrates.. The enzyme catalyses a ganglioside GD1a + H2O = a ganglioside GM1 + N-acetylneuraminate. The catalysed reaction is a ganglioside GM1 + H2O = a ganglioside GA1 + N-acetylneuraminate. It carries out the reaction a ganglioside GT1b + H2O = a ganglioside GD1b + N-acetylneuraminate. It catalyses the reaction a ganglioside GD1b + H2O = a ganglioside GM1 + N-acetylneuraminate. The enzyme catalyses a ganglioside GD3 + H2O = a ganglioside GM3 + N-acetylneuraminate. The catalysed reaction is a ganglioside GM3 + H2O = a beta-D-galactosyl-(1-&gt;4)-beta-D-glucosyl-(1&lt;-&gt;1)-ceramide + N-acetylneuraminate. It carries out the reaction a ganglioside GM2 + H2O = a ganglioside GA2 + N-acetylneuraminate. It catalyses the reaction a neolactoside IV(3)-alpha-NeuAc-nLc4Cer(d18:1(4E)) + H2O = a neolactoside nLc4Cer(d18:1(4E)) + N-acetylneuraminate. The enzyme catalyses N-acetyl-alpha-neuraminosyl-(2-&gt;3)-beta-D-galactosyl-(1-&gt;4)-D-glucose + H2O = lactose + N-acetylneuraminate. Functionally, exo-alpha-sialidase that catalyzes the hydrolytic cleavage of the terminal sialic acid (N-acetylneuraminic acid, Neu5Ac) of a glycan moiety in the catabolism of glycolipids, glycoproteins and oligosacharides. Recognizes sialyl linkage positions of the glycan moiety as well as the supramolecular organization of the sialoglycoconjugate. Displays preference for alpha-(2-&gt;3)-sialylated GD1a and GT1B gangliosides over alpha-(2-&gt;8)-sialylated GD1b, in both monomeric forms and micelles. Hydrolyzes monomeric GM1 ganglioside, but has no activity toward the miscellar form. Has lower sialidase activity for glycoproteins such as fetuin and TF/transferrin that carry a mixture of alpha-(2-&gt;3) and alpha-(2-&gt;6)-sialyl linkages. Cleaves milk oligosaccharide alpha-(2-&gt;3)-sialyllactose, but is inactive toward alpha-(2-&gt;6)-sialyllactose isomer. Has no activity toward colominic acid, a homomer of alpha-(2-&gt;8)-linked Neu5Ac residues. This Rattus norvegicus (Rat) protein is Sialidase-2 (Neu2).